A 1543-amino-acid chain; its full sequence is Rho guanine nucleotide exchange factor 12 (1543 aa).

Positions 1–62 (MSGTQSTITD…KTKSSSEESR (62 aa)) are disordered. The residue at position 2 (S2) is an N-acetylserine. The segment covering 28–45 (SPTDKKQKVERSSSHDFD) has biased composition (basic and acidic residues). S41 bears the Phosphoserine mark. Residues 72–151 (CVIIQKDDNG…LTVQGRPPGS (80 aa)) form the PDZ domain. The stretch at 194-262 (VGEENNVVHN…LSKATGSAQD (69 aa)) forms a coiled coil. A disordered region spans residues 281 to 355 (AEADPGDGLC…GAPHIIGAED (75 aa)). Residues 293–312 (DWSSGDASRPSSDSADSPKS) are compositionally biased toward low complexity. S309 is modified (phosphoserine). Residues 313–329 (SLRERSYLEEAPERSEG) are compositionally biased toward basic and acidic residues. S341 is modified (phosphoserine). Residues 367–558 (GQCSCFQSIE…LMYMKYLGVK (192 aa)) form the RGSL domain. A disordered region spans residues 574-710 (FLPKIKQSMK…DSTPRVPTTV (137 aa)). Residues 582–592 (MKKDREGEEKG) show a composition bias toward basic and acidic residues. A Phosphoserine modification is found at S637. The span at 663–676 (ASSMSSATSGTALS) shows a compositional bias: low complexity. Phosphothreonine is present on T736. Residues 787–977 (KRQEVINELF…RQILNYVNQA (191 aa)) form the DH domain. Positions 981–1004 (AENKQRLEDYQRRLDTSNLKLSEY) form a coiled coil. One can recognise a PH domain in the interval 1019–1132 (KMIHEGPLVW…WQDLICRMAA (114 aa)). Positions 1137–1158 (QSTKPIPLPQPPPCEGDNDEEE) are disordered. Phosphoserine is present on residues S1288, S1327, and S1377. Disordered stretches follow at residues 1386–1405 (EAHS…KEEK) and 1441–1468 (PVTG…GPVS). The segment covering 1450-1460 (SSHQQQHSPQN) has biased composition (polar residues). Phosphoserine occurs at positions 1457 and 1540.

Interacts with GNA12 and GNA13, probably through the RGS-like domain, with RHOA, PLXNB1 and PLXNB2, and through its PDZ domain with IGF1R beta subunit. Interacts with GCSAM. Found in a complex with ARHGEF11 and ARHGEF12; binding to ARHGEF11 and ARHGEF12 enhances CDC42 GEF activity of PLEKHG4B, and PLEKHG4B, in turn, inhibits ARHGEF11- and ARHGEF12-mediated RHOA activation. In terms of tissue distribution, expressed in brain, predominantly in neuronal cell bodies.

Its subcellular location is the cytoplasm. The protein resides in the membrane. May play a role in the regulation of RhoA GTPase by guanine nucleotide-binding alpha-12 (GNA12) and alpha-13 (GNA13). Acts as guanine nucleotide exchange factor (GEF) for RhoA GTPase and may act as GTPase-activating protein (GAP) for GNA12 and GNA13. This chain is Rho guanine nucleotide exchange factor 12 (Arhgef12), found in Mus musculus (Mouse).